We begin with the raw amino-acid sequence, 331 residues long: DNA double-strand break repair nuclease NurA (331 aa).

Aspartate 56 and aspartate 131 together coordinate Mn(2+).

The protein belongs to the NurA family. Homodimer. Interacts with SSB. It depends on Mn(2+) as a cofactor.

The 5'-3' ssDNA and dsDNA exonuclease and ssDNA endonuclease activities are inhibited by SSB (single-stranded DNA-binding protein). In terms of biological role, involved in DNA double-strand break (DSB) repair. Probably acts with HerA to stimulate resection of the 5' strand and produce the long 3' single-strand that is required for RadA loading. Exhibits both single-stranded endonuclease activity and 5'-3' exonuclease activity on single-stranded and double-stranded DNA. This Sulfurisphaera tokodaii (strain DSM 16993 / JCM 10545 / NBRC 100140 / 7) (Sulfolobus tokodaii) protein is DNA double-strand break repair nuclease NurA.